The sequence spans 391 residues: Carbamoyl phosphate synthase small chain (391 aa).

The segment at 1 to 189 is CPSase; sequence MIKSALLVLE…DLPAAKQPED (189 aa). Residues Ser47, Gly241, and Gly243 each contribute to the L-glutamine site. The region spanning 193–380 is the Glutamine amidotransferase type-1 domain; that stretch reads HVVAYDYGVK…IELIEAYRAS (188 aa). Cys269 functions as the Nucleophile in the catalytic mechanism. Residues Leu270, Gln273, Asn311, Gly313, and Phe314 each coordinate L-glutamine. Catalysis depends on residues His353 and Glu355.

It belongs to the CarA family. As to quaternary structure, composed of two chains; the small (or glutamine) chain promotes the hydrolysis of glutamine to ammonia, which is used by the large (or ammonia) chain to synthesize carbamoyl phosphate. Tetramer of heterodimers (alpha,beta)4.

The enzyme catalyses hydrogencarbonate + L-glutamine + 2 ATP + H2O = carbamoyl phosphate + L-glutamate + 2 ADP + phosphate + 2 H(+). It catalyses the reaction L-glutamine + H2O = L-glutamate + NH4(+). It functions in the pathway amino-acid biosynthesis; L-arginine biosynthesis; carbamoyl phosphate from bicarbonate: step 1/1. It participates in pyrimidine metabolism; UMP biosynthesis via de novo pathway; (S)-dihydroorotate from bicarbonate: step 1/3. Its function is as follows. Small subunit of the glutamine-dependent carbamoyl phosphate synthetase (CPSase). CPSase catalyzes the formation of carbamoyl phosphate from the ammonia moiety of glutamine, carbonate, and phosphate donated by ATP, constituting the first step of 2 biosynthetic pathways, one leading to arginine and/or urea and the other to pyrimidine nucleotides. The small subunit (glutamine amidotransferase) binds and cleaves glutamine to supply the large subunit with the substrate ammonia. This chain is Carbamoyl phosphate synthase small chain, found in Yersinia pestis.